The sequence spans 261 residues: Small ribosomal subunit protein uS3 (261 aa).

Positions 39–107 constitute a KH type-2 domain; sequence VREYLKRKLA…PVHVSIEEIR (69 aa). A disordered region spans residues 213-261; the sequence is QPVAEEPAADDRRPRRTPGRPDGDKPRTRTVKKVDGAADPAKRVRKAGA. A compositionally biased stretch (basic and acidic residues) spans 221-254; the sequence is ADDRRPRRTPGRPDGDKPRTRTVKKVDGAADPAK.

The protein belongs to the universal ribosomal protein uS3 family. As to quaternary structure, part of the 30S ribosomal subunit. Forms a tight complex with proteins S10 and S14.

Binds the lower part of the 30S subunit head. Binds mRNA in the 70S ribosome, positioning it for translation. This Dechloromonas aromatica (strain RCB) protein is Small ribosomal subunit protein uS3.